Reading from the N-terminus, the 183-residue chain is Adenine phosphoribosyltransferase (183 aa).

This sequence belongs to the purine/pyrimidine phosphoribosyltransferase family. In terms of assembly, homodimer.

The protein localises to the cytoplasm. It carries out the reaction AMP + diphosphate = 5-phospho-alpha-D-ribose 1-diphosphate + adenine. It participates in purine metabolism; AMP biosynthesis via salvage pathway; AMP from adenine: step 1/1. Functionally, catalyzes a salvage reaction resulting in the formation of AMP, that is energically less costly than de novo synthesis. The protein is Adenine phosphoribosyltransferase of Proteus mirabilis (strain HI4320).